Reading from the N-terminus, the 84-residue chain is Small ribosomal subunit protein uS17 (84 aa).

It belongs to the universal ribosomal protein uS17 family. Part of the 30S ribosomal subunit.

Its function is as follows. One of the primary rRNA binding proteins, it binds specifically to the 5'-end of 16S ribosomal RNA. This is Small ribosomal subunit protein uS17 from Vibrio atlanticus (strain LGP32) (Vibrio splendidus (strain Mel32)).